We begin with the raw amino-acid sequence, 147 residues long: Sentan (147 aa).

Residues 1–36 form a disordered region; the sequence is MGGCMHSTWDHALHSRGEPRPSEAPASISAPSKMPK. The segment covering 8–21 has biased composition (basic and acidic residues); the sequence is TWDHALHSRGEPRP. The span at 23-32 shows a compositional bias: low complexity; the sequence is EAPASISAPS.

Belongs to the S-100 family. Expressed exclusively in ciliated epithelial cells. Detected in ciliated epithelium of trachea and oviduct (at protein level).

It localises to the cell projection. The protein resides in the cilium. Functionally, may be a component of the linker structure that bridges the ciliary membrane and peripheral singlet microtubules. This Mus musculus (Mouse) protein is Sentan (Sntn).